The primary structure comprises 465 residues: D(1C) dopamine receptor (465 aa).

Topologically, residues Met1 to Leu30 are extracellular. Asn3 and Asn8 each carry an N-linked (GlcNAc...) asparagine glycan. The helical transmembrane segment at Thr31–Ile54 threads the bilayer. The Cytoplasmic portion of the chain corresponds to Lys55–Asn65. Residues Phe66–Ala92 traverse the membrane as a helical segment. The Extracellular portion of the chain corresponds to Gly93 to Cys101. Cys101 and Cys187 are joined by a disulfide. A helical transmembrane segment spans residues Asp102–Leu124. Topologically, residues Asp125–Arg143 are cytoplasmic. Residues Val144–Trp168 form a helical membrane-spanning segment. Over His169 to Arg193 the chain is Extracellular. Residues Thr194–Tyr219 traverse the membrane as a helical segment. At Arg220–Lys264 the chain is on the cytoplasmic side. The chain crosses the membrane as a helical span at residues Thr265–His291. Residues Met292–Thr309 lie on the Extracellular side of the membrane. The helical transmembrane segment at Phe310–Phe334 threads the bilayer. Residues Arg335–Tyr465 lie on the Cytoplasmic side of the membrane. Cys344 carries the S-palmitoyl cysteine lipid modification.

It belongs to the G-protein coupled receptor 1 family. Brain and kidney.

The protein localises to the cell membrane. The protein resides in the cell projection. It localises to the cilium membrane. Functionally, this is one of the five types (D1 to D5) of receptors for dopamine. The activity of this receptor is mediated by G proteins which activate adenylyl cyclase. This chain is D(1C) dopamine receptor (drd1c), found in Xenopus laevis (African clawed frog).